The primary structure comprises 537 residues: Phosphoenolpyruvate carboxykinase (ATP) (537 aa).

Substrate contacts are provided by Arg61, Tyr194, and Lys200. ATP contacts are provided by residues Lys200, His219, and Gly235–Thr243. Mn(2+) contacts are provided by Lys200 and His219. A Mn(2+)-binding site is contributed by Asp256. ATP is bound by residues Glu284, Arg322, and Thr448. Arg322 is a binding site for substrate.

Belongs to the phosphoenolpyruvate carboxykinase (ATP) family. Mn(2+) serves as cofactor.

It localises to the cytoplasm. The catalysed reaction is oxaloacetate + ATP = phosphoenolpyruvate + ADP + CO2. It functions in the pathway carbohydrate biosynthesis; gluconeogenesis. In terms of biological role, involved in the gluconeogenesis. Catalyzes the conversion of oxaloacetate (OAA) to phosphoenolpyruvate (PEP) through direct phosphoryl transfer between the nucleoside triphosphate and OAA. This is Phosphoenolpyruvate carboxykinase (ATP) from Bradyrhizobium sp. (strain ORS 278).